The following is a 102-amino-acid chain: Peptide chaperone MftB (102 aa).

This sequence belongs to the peptide chaperone MftB family.

Peptide chaperone involved in the biosynthesis of the enzyme cofactor mycofactocin (MFT). Binds MftA and MftC with high affinity, and is essential for MftC activity on MftA, likely via the formation of a ternary complex. Is required for the in vivo ethanol assimilation in M.smegmatis. This Mycolicibacterium smegmatis (strain ATCC 700084 / mc(2)155) (Mycobacterium smegmatis) protein is Peptide chaperone MftB.